The chain runs to 264 residues: Small ribosomal subunit protein uS2 (264 aa).

Residues 228–264 (HEDVSAGPVEEQSDEAQAAEQGTEGDTAQLTSSQGRS) are disordered. The span at 251–264 (EGDTAQLTSSQGRS) shows a compositional bias: polar residues.

The protein belongs to the universal ribosomal protein uS2 family.

The sequence is that of Small ribosomal subunit protein uS2 from Deinococcus radiodurans (strain ATCC 13939 / DSM 20539 / JCM 16871 / CCUG 27074 / LMG 4051 / NBRC 15346 / NCIMB 9279 / VKM B-1422 / R1).